The primary structure comprises 37 residues: Large ribosomal subunit protein bL36 (37 aa).

The protein belongs to the bacterial ribosomal protein bL36 family.

The polypeptide is Large ribosomal subunit protein bL36 (Nostoc punctiforme (strain ATCC 29133 / PCC 73102)).